Consider the following 302-residue polypeptide: Snake venom metalloprotease inhibitor 02A10 (302 aa).

Residues 1-23 form the signal peptide; the sequence is MSVSRLAASGLLLVSLLALALDG. The propeptide occupies 24–47; sequence KPVEKWSPWLWPPRPRPPIPPLQQ. The interval 32-302 is disordered; sequence WLWPPRPRPP…CPKLPPSGGH (271 aa). The segment covering 33–44 has biased composition (pro residues); it reads LWPPRPRPPIPP. A Pyrrolidone carboxylic acid modification is found at Q48. A propeptide spanning residues 51–58 is cleaved from the precursor; sequence LDPPIPQQ. Q59 is modified (pyrrolidone carboxylic acid). Residues 62 to 69 constitute a propeptide that is removed on maturation; the sequence is LDPPIPQQ. Pyrrolidone carboxylic acid is present on Q70. Residues 73 to 80 constitute a propeptide that is removed on maturation; sequence LDPPIPQQ. Q81 is subject to Pyrrolidone carboxylic acid. Positions 84-91 are excised as a propeptide; it reads LNPPIPQQ. Q92 carries the post-translational modification Pyrrolidone carboxylic acid. The propeptide occupies 95–102; that stretch reads LDPPIPQQ. Pyrrolidone carboxylic acid is present on Q103. The propeptide occupies 106–113; it reads LNPPIPQQ. Q114 carries the pyrrolidone carboxylic acid modification. Residues 117–124 constitute a propeptide that is removed on maturation; sequence LNPPIPQQ. Pyrrolidone carboxylic acid is present on Q125. A propeptide spanning residues 128–135 is cleaved from the precursor; sequence LNPPIPQQ. At Q136 the chain carries Pyrrolidone carboxylic acid. The propeptide occupies 139 to 146; sequence LNPPIPQQ. At Q147 the chain carries Pyrrolidone carboxylic acid. A propeptide spanning residues 150–157 is cleaved from the precursor; that stretch reads LDPPIPQQ. Q158 bears the Pyrrolidone carboxylic acid mark. Positions 161–168 are excised as a propeptide; sequence LDPPIPQQ. Pyrrolidone carboxylic acid is present on Q169. The propeptide occupies 172-179; that stretch reads LDPPIPQQ. Q180 bears the Pyrrolidone carboxylic acid mark. Residues 183 to 190 constitute a propeptide that is removed on maturation; it reads LNPPIPQQ. Position 191 is a pyrrolidone carboxylic acid (Q191). Positions 194–201 are excised as a propeptide; that stretch reads LDPPIPQQ. Q202 carries the pyrrolidone carboxylic acid modification. Positions 205–212 are excised as a propeptide; it reads LDPPIPQQ. Q213 is modified (pyrrolidone carboxylic acid). A propeptide spanning residues 216-223 is cleaved from the precursor; it reads LNPPIPQQ. The residue at position 224 (Q224) is a Pyrrolidone carboxylic acid. Positions 227 to 273 are excised as a propeptide; that stretch reads QRPLQPEVPSLMELHQERQKQGRMMHHDEDPGDAAEGPRRQKKEPGK. 2 stretches are compositionally biased toward basic and acidic residues: residues 240–255 and 262–273; these read LHQERQKQGRMMHHDE and EGPRRQKKEPGK. The cysteines at positions 279 and 293 are disulfide-linked. A propeptide spanning residues 294–302 is cleaved from the precursor; sequence PKLPPSGGH.

It in the C-terminal section; belongs to the natriuretic peptide family. As to expression, expressed by the venom gland.

It localises to the secreted. Functionally, pEKW peptides may serve as metalloproteinase inhibitors during glandular storage. Their inhibition may be instantly disengaged, by dilution or physiochemical change, when venom is injected into tissue of the victim. In terms of biological role, exhibits hypotensive and vasodepressor activity. Acts by activating natriuretic receptors (NPR1 and/or NPR2 and/or NPR3). The protein is Snake venom metalloprotease inhibitor 02A10 (Svmpi-Cce12) of Cerastes cerastes (Horned desert viper).